Reading from the N-terminus, the 134-residue chain is MYRLDVVTPTGSVFSGDVYQTVITTADGEIGILENHMLLLTNITPGKLRIEKADGEVKEFAVTYGVLDVRGDKVIALVEEVFELDEINVDNEKQLLEEANQKLQNENLSEEEKEHYEKQRSRSQALLNLASAKV.

The tract at residues 100-134 (NQKLQNENLSEEEKEHYEKQRSRSQALLNLASAKV) is disordered. The span at 110–120 (EEEKEHYEKQR) shows a compositional bias: basic and acidic residues.

This sequence belongs to the ATPase epsilon chain family. As to quaternary structure, F-type ATPases have 2 components, CF(1) - the catalytic core - and CF(0) - the membrane proton channel. CF(1) has five subunits: alpha(3), beta(3), gamma(1), delta(1), epsilon(1). CF(0) has three main subunits: a, b and c.

The protein localises to the cell inner membrane. Its function is as follows. Produces ATP from ADP in the presence of a proton gradient across the membrane. The chain is ATP synthase epsilon chain from Sulfurihydrogenibium sp. (strain YO3AOP1).